We begin with the raw amino-acid sequence, 347 residues long: Zinc finger protein CONSTANS-LIKE 2 (347 aa).

8 residues coordinate Zn(2+): Cys16, Cys19, Cys39, His44, Cys59, Cys62, Cys82, and His87. The B box-type 1; atypical zinc finger occupies 16–58; the sequence is CDTCRSAACTVYCEADSAYLCTTCDARVHAANRVASRHERVRV. Residues 59 to 101 form a B box-type 2; atypical zinc finger; the sequence is CQSCESAPAAFLCKADAASLCTACDAEIHSANPLARRHQRVPI. A CCT domain is found at 278-320; the sequence is REARVLRYREKKKTRKFDKTIRYASRKAYAEIRPRIKGRFAKR.

This sequence belongs to the CONSTANS family. As to expression, highly expressed in leaves. Expressed at lower levels in stems, flowers and siliques. Not detected in roots.

The protein localises to the nucleus. In terms of biological role, putative transcription factor. Does not affect flowering time. The chain is Zinc finger protein CONSTANS-LIKE 2 (COL2) from Arabidopsis thaliana (Mouse-ear cress).